The sequence spans 701 residues: Acetyl-coenzyme A synthetase, cytoplasmic (701 aa).

A compositionally biased stretch (basic and acidic residues) spans 1 to 26 (MGLPEERRKSGSGSRAREETGAEGRV). The interval 1–37 (MGLPEERRKSGSGSRAREETGAEGRVRGWSPPPEVRR) is disordered. The interval 1 to 107 (MGLPEERRKS…GATTNICYNV (107 aa)) is interaction with TFEB. Serine 30 is modified (phosphoserine). A CoA-binding site is contributed by 219 to 222 (RGEK). A phosphoserine mark is found at serine 263, serine 265, and serine 267. A CoA-binding site is contributed by threonine 363. N6-acetyllysine is present on lysine 418. ATP-binding positions include 439–441 (GEP), 463–468 (DTFWQT), aspartate 552, and arginine 567. CoA is bound by residues serine 575 and arginine 636. A Nuclear localization signal motif is present at residues 656 to 668 (KTRSGKIMRRVLR). Phosphoserine; by AMPK is present on serine 659. Position 661 is an N6-acetyllysine (lysine 661).

The protein belongs to the ATP-dependent AMP-binding enzyme family. As to quaternary structure, monomer. Interacts with TFEB. AMPK-mediated phosphorylated form at Ser-659 interacts with KPNA1; this interaction results in nuclear translocation of ACSS2. Interacts with the 'Thr-172' phosphorylated form of PRKAA2. Interacts with CREBBP. Reversibly acetylated at Lys-661. The acetyl-CoA synthase activity is inhibited by acetylation and activated by deacetylation mediated by the deacetylases SIRT1 and SIRT3. In terms of tissue distribution, expressed in the hippocampus.

The protein resides in the cytoplasm. The protein localises to the cytosol. It is found in the nucleus. The catalysed reaction is acetate + ATP + CoA = acetyl-CoA + AMP + diphosphate. It carries out the reaction propanoate + ATP + CoA = propanoyl-CoA + AMP + diphosphate. Inhibited by acetylation at Lys-661 and activated by deacetylation mediated by the deacetylases SIRT1 and SIRT3. In terms of biological role, catalyzes the synthesis of acetyl-CoA from short-chain fatty acids. Acetate is the preferred substrate but can also utilize propionate with a much lower affinity. Nuclear ACSS2 promotes glucose deprivation-induced lysosomal biogenesis and autophagy, tumor cell survival and brain tumorigenesis. Glucose deprivation results in AMPK-mediated phosphorylation of ACSS2 leading to its translocation to the nucleus where it binds to TFEB and locally produces acetyl-CoA for histone acetylation in the promoter regions of TFEB target genes thereby activating their transcription. The regulation of genes associated with autophagy and lysosomal activity through ACSS2 is important for brain tumorigenesis and tumor survival. Acts as a chromatin-bound transcriptional coactivator that up-regulates histone acetylation and expression of neuronal genes. Can be recruited to the loci of memory-related neuronal genes to maintain a local acetyl-CoA pool, providing the substrate for histone acetylation and promoting the expression of specific genes, which is essential for maintaining long-term spatial memory. This is Acetyl-coenzyme A synthetase, cytoplasmic (Acss2) from Mus musculus (Mouse).